A 244-amino-acid polypeptide reads, in one-letter code: tRNA pseudouridine synthase A (244 aa).

Asp52 serves as the catalytic Nucleophile. Tyr110 provides a ligand contact to substrate.

It belongs to the tRNA pseudouridine synthase TruA family. As to quaternary structure, homodimer.

It carries out the reaction uridine(38/39/40) in tRNA = pseudouridine(38/39/40) in tRNA. Formation of pseudouridine at positions 38, 39 and 40 in the anticodon stem and loop of transfer RNAs. The sequence is that of tRNA pseudouridine synthase A from Pelobacter propionicus (strain DSM 2379 / NBRC 103807 / OttBd1).